Consider the following 118-residue polypeptide: MISKPDKNKTRQRRHARVRGKISGTAERPRLNVYRSNKNIYAQVIDDVEGVTLASASTLDSEVKGNNKTEKAASVGEVVAKRAAEKKIVDVVFDRGGYLYHGRVQALAEAARENGLKF.

The segment at 1-24 (MISKPDKNKTRQRRHARVRGKISG) is disordered. Residues 10 to 20 (TRQRRHARVRG) are compositionally biased toward basic residues.

Belongs to the universal ribosomal protein uL18 family. Part of the 50S ribosomal subunit; part of the 5S rRNA/L5/L18/L25 subcomplex. Contacts the 5S and 23S rRNAs.

Functionally, this is one of the proteins that bind and probably mediate the attachment of the 5S RNA into the large ribosomal subunit, where it forms part of the central protuberance. This is Large ribosomal subunit protein uL18 from Lactiplantibacillus plantarum (strain ATCC BAA-793 / NCIMB 8826 / WCFS1) (Lactobacillus plantarum).